The sequence spans 344 residues: N-acetyl-gamma-glutamyl-phosphate reductase (344 aa).

Cys148 is an active-site residue.

The protein belongs to the NAGSA dehydrogenase family. Type 1 subfamily.

The protein localises to the cytoplasm. The catalysed reaction is N-acetyl-L-glutamate 5-semialdehyde + phosphate + NADP(+) = N-acetyl-L-glutamyl 5-phosphate + NADPH + H(+). It functions in the pathway amino-acid biosynthesis; L-arginine biosynthesis; N(2)-acetyl-L-ornithine from L-glutamate: step 3/4. Functionally, catalyzes the NADPH-dependent reduction of N-acetyl-5-glutamyl phosphate to yield N-acetyl-L-glutamate 5-semialdehyde. The chain is N-acetyl-gamma-glutamyl-phosphate reductase from Geobacillus thermodenitrificans (strain NG80-2).